We begin with the raw amino-acid sequence, 340 residues long: 7,8-didemethyl-8-hydroxy-5-deazariboflavin synthase (340 aa).

The 232-residue stretch at 25–256 folds into the Radical SAM core domain; sequence ATYSPAYTIV…SDITIQIPPN (232 aa). 3 residues coordinate [4Fe-4S] cluster: C39, C43, and C46.

The protein belongs to the radical SAM superfamily. CofG family. Consists of two subunits, CofG and CofH. Requires [4Fe-4S] cluster as cofactor.

It catalyses the reaction 5-amino-5-(4-hydroxybenzyl)-6-(D-ribitylimino)-5,6-dihydrouracil + S-adenosyl-L-methionine = 7,8-didemethyl-8-hydroxy-5-deazariboflavin + 5'-deoxyadenosine + L-methionine + NH4(+) + H(+). The protein operates within cofactor biosynthesis; coenzyme F0 biosynthesis. Functionally, catalyzes the radical-mediated synthesis of 7,8-didemethyl-8-hydroxy-5-deazariboflavin from 5-amino-5-(4-hydroxybenzyl)-6-(D-ribitylimino)-5,6-dihydrouracil. This is 7,8-didemethyl-8-hydroxy-5-deazariboflavin synthase from Trichormus variabilis (strain ATCC 29413 / PCC 7937) (Anabaena variabilis).